Consider the following 430-residue polypeptide: Adenylosuccinate synthetase (430 aa).

GTP contacts are provided by residues 12–18 and 40–42; these read GDEGKGK and GHT. Aspartate 13 serves as the catalytic Proton acceptor. Aspartate 13 and glycine 40 together coordinate Mg(2+). IMP-binding positions include 13–16, 38–41, threonine 128, arginine 142, glutamine 223, threonine 238, and arginine 302; these read DEGK and NAGH. The active-site Proton donor is histidine 41. 298–304 contributes to the substrate binding site; that stretch reads TTTGRPR. GTP-binding positions include arginine 304, 330–332, and 412–414; these read CID and SVG.

The protein belongs to the adenylosuccinate synthetase family. Homodimer. Mg(2+) is required as a cofactor.

The protein localises to the cytoplasm. It catalyses the reaction IMP + L-aspartate + GTP = N(6)-(1,2-dicarboxyethyl)-AMP + GDP + phosphate + 2 H(+). Its pathway is purine metabolism; AMP biosynthesis via de novo pathway; AMP from IMP: step 1/2. Plays an important role in the de novo pathway of purine nucleotide biosynthesis. Catalyzes the first committed step in the biosynthesis of AMP from IMP. The sequence is that of Adenylosuccinate synthetase from Streptococcus thermophilus (strain CNRZ 1066).